Here is a 682-residue protein sequence, read N- to C-terminus: Solute carrier organic anion transporter family member 2B1 (682 aa).

Residues 1–30 (MPDRSTKATMGAEDIHERKVSMEPRDSHQD) form a disordered region. The Cytoplasmic segment spans residues 1-41 (MPDRSTKATMGAEDIHERKVSMEPRDSHQDAQPRGMFQNIK). Over residues 13-30 (EDIHERKVSMEPRDSHQD) the composition is skewed to basic and acidic residues. Serine 21 carries the post-translational modification Phosphoserine. A helical transmembrane segment spans residues 42-61 (FFVLCHSILQLAQLMISGYL). Over 62–80 (KSSISTVEKRFGLSSQTSG) the chain is Extracellular. The helical transmembrane segment at 81–101 (LLAAFNEVGNISLILFVSYFG) threads the bilayer. Residues 102–107 (SRVHRP) lie on the Cytoplasmic side of the membrane. Residues 108–132 (RMIGCGAILVAVAGLLMALPHFISE) traverse the membrane as a helical segment. Residues 133 to 176 (PYRYDHSSPDRSQDFEASLCLPTTMAPASALSNDSCSSRTETKH) are Extracellular-facing. N-linked (GlcNAc...) asparagine glycosylation is present at asparagine 165. A helical membrane pass occupies residues 177–206 (LTMVGIMFTAQTLLGIGGVPIQPFGISYID). Over 207–225 (DFAHHSNSPLYLGILFAIT) the chain is Cytoplasmic. Residues 226-246 (MMGPGLAYGLGSLMLRLYVDI) form a helical membrane-spanning segment. The Extracellular segment spans residues 247 to 264 (DRMPEGGINLTTKDPRWV). Asparagine 255 carries an N-linked (GlcNAc...) asparagine glycan. A helical membrane pass occupies residues 265 to 289 (GAWWLGFLISAGLVVLAASPYFFFP). The Cytoplasmic segment spans residues 290 to 354 (REMPKEKYEL…IKVFPRVLLR (65 aa)). Phosphoserine is present on residues serine 311 and serine 314. A helical transmembrane segment spans residues 355–376 (TLRHPIFLLVVLSQVCTSSMVA). Over 377-396 (GTATFLPKFLERQFSITASF) the chain is Extracellular. The chain crosses the membrane as a helical span at residues 397 to 420 (ANLLLGCLTIPLAIVGIVVGGVLV). Topologically, residues 421-424 (KRLH) are cytoplasmic. Residues 425-448 (LSPMQCSALCLLGSLLCLLLSLPL) traverse the membrane as a helical segment. Topologically, residues 449 to 552 (FFIGCSTHHI…SACSRLVLPF (104 aa)) are extracellular. In terms of domain architecture, Kazal-like spans 471-531 (PSLFPGCSEP…VFYTNCSCVA (61 aa)). 3 disulfides stabilise this stretch: cysteine 477–cysteine 508, cysteine 483–cysteine 504, and cysteine 492–cysteine 529. N-linked (GlcNAc...) asparagine glycans are attached at residues asparagine 526 and asparagine 533. The chain crosses the membrane as a helical span at residues 553–575 (ILLISLGAAVASITHTPSFMLIL). At 576-584 (RGVKKEDKT) the chain is on the cytoplasmic side. The helical transmembrane segment at 585–610 (LAVGMQFMLLRVLAWMPSPVIHGSAI) threads the bilayer. Residues 611 to 643 (DTTCVHWALTCGRRAVCRYYDHDLLRNRFIGLQ) lie on the Extracellular side of the membrane. Residues 644–661 (FFFKSGSLVCFALVLAIL) form a helical membrane-spanning segment. Topologically, residues 662–682 (RQQSREASTKATVKSSDLQEL) are cytoplasmic.

The protein belongs to the organo anion transporter (TC 2.A.60) family. As to expression, expressed in liver, kidney, heart, lung and retina. Widely distributed in all brain regions.

It localises to the cell membrane. Its subcellular location is the basal cell membrane. It is found in the apical cell membrane. The enzyme catalyses coproporphyrin III(out) = coproporphyrin III(in). It catalyses the reaction substance P(out) = substance P(in). The catalysed reaction is taurocholate(out) = taurocholate(in). It carries out the reaction prostaglandin E1(out) = prostaglandin E1(in). The enzyme catalyses prostaglandin E2(out) = prostaglandin E2(in). It catalyses the reaction prostaglandin D2(out) = prostaglandin D2(in). The catalysed reaction is leukotriene C4(out) = leukotriene C4(in). It carries out the reaction L-thyroxine(out) = L-thyroxine(in). Mediates the Na(+)-independent transport of organic anions such as taurocholate, the prostaglandins D2 (PGD2), E1 (PGE1) and E2 (PGE2), leukotriene C4, thromboxane B2 and L-thyroxine. Also plays a role in the reuptake of neuropeptides such as substance P/TAC1 and vasoactive intestinal peptide/VIP released from retinal neurons. May act as a heme transporter that promotes cellular iron availability. Also transports heme by-product coproporphyrin III (CPIII), and may be involved in their hepatic disposition. May contribute to regulate the transport of organic compounds in testis across the blood-testis-barrier. Shows a pH-sensitive substrate specificity which may be ascribed to the protonation state of the binding site and leads to a stimulation of substrate transport in an acidic microenvironment. The exact transport mechanism has not been yet deciphered but most likely involves an anion exchange, coupling the cellular uptake of organic substrate with the efflux of an anionic compound. Hydrogencarbonate/HCO3(-) acts as a probable counteranion that exchanges for organic anions. Cytoplasmic glutamate may also act as counteranion in the placenta. The chain is Solute carrier organic anion transporter family member 2B1 from Rattus norvegicus (Rat).